Here is a 600-residue protein sequence, read N- to C-terminus: UvrABC system protein C (600 aa).

The GIY-YIG domain occupies 15 to 100; it reads NSTGVYQYFN…IKQLHPKYNI (86 aa). Residues 203–238 enclose the UVR domain; that stretch reads SVLLKNLEKQMLVLAQNENYEEAAKVRDQIAMIKDL.

Belongs to the UvrC family. Interacts with UvrB in an incision complex.

It localises to the cytoplasm. In terms of biological role, the UvrABC repair system catalyzes the recognition and processing of DNA lesions. UvrC both incises the 5' and 3' sides of the lesion. The N-terminal half is responsible for the 3' incision and the C-terminal half is responsible for the 5' incision. The polypeptide is UvrABC system protein C (Campylobacter jejuni subsp. jejuni serotype O:2 (strain ATCC 700819 / NCTC 11168)).